Consider the following 478-residue polypeptide: Phosphoglycerate kinase 2, chloroplastic (478 aa).

The N-terminal 74 residues, 1 to 74 (MASTAATAAL…GKGARGVITM (74 aa)), are a transit peptide targeting the chloroplast. At Ser78 the chain carries Phosphoserine. The (2R)-3-phosphoglycerate site is built by Ala96, Asp97, Asn99, Arg113, Thr135, His136, Gly138, Arg139, Arg194, His226, and Arg227. Residue Gly272 coordinates ADP. Gly272 is a binding site for CDP. Residues Lys274 and Lys278 each coordinate AMP. Residue Lys278 coordinates ATP. An ADP-binding site is contributed by Gly296. CDP is bound at residue Gly296. Positions 297 and 369 each coordinate AMP. The ATP site is built by Gly297 and Gly369. Residues Gly394 and Phe399 each coordinate CDP. Phe399 provides a ligand contact to ADP. Glu400 is an AMP binding site. Glu400, Asp431, and Ser432 together coordinate ATP. Asp431 provides a ligand contact to Mg(2+).

The protein belongs to the phosphoglycerate kinase family. As to quaternary structure, monomer. Mg(2+) serves as cofactor.

It localises to the plastid. The protein localises to the chloroplast. It catalyses the reaction (2R)-3-phosphoglycerate + ATP = (2R)-3-phospho-glyceroyl phosphate + ADP. It functions in the pathway carbohydrate biosynthesis; Calvin cycle. This chain is Phosphoglycerate kinase 2, chloroplastic, found in Arabidopsis thaliana (Mouse-ear cress).